The following is a 199-amino-acid chain: MSRVLIIESSARQQDSVSRQLTKDFIQQWQAAHPADQITVRDLAVSPVPHLDANLLGGWMKPEEQRSAAELEALARSNELTDELLAADVLVMAAPMYNFTIPSTLKAWLDHVLRAGITFKYTPTGPQGLLTGKRAIVLTARGGIHAGASSDHQEPYLRQVMAFIGIHDVDFIHAEGLNMSGEFHEKGVNQAKAKLAAVA.

FMN-binding positions include Ser-10, 16–18 (SVS), and 96–99 (MYNF).

It belongs to the azoreductase type 1 family. Homodimer. It depends on FMN as a cofactor.

The enzyme catalyses 2 a quinone + NADH + H(+) = 2 a 1,4-benzosemiquinone + NAD(+). It catalyses the reaction N,N-dimethyl-1,4-phenylenediamine + anthranilate + 2 NAD(+) = 2-(4-dimethylaminophenyl)diazenylbenzoate + 2 NADH + 2 H(+). Its function is as follows. Quinone reductase that provides resistance to thiol-specific stress caused by electrophilic quinones. In terms of biological role, also exhibits azoreductase activity. Catalyzes the reductive cleavage of the azo bond in aromatic azo compounds to the corresponding amines. This Pseudomonas putida (strain ATCC 47054 / DSM 6125 / CFBP 8728 / NCIMB 11950 / KT2440) protein is FMN-dependent NADH:quinone oxidoreductase 2.